A 91-amino-acid chain; its full sequence is Elongation factor 1-beta (91 aa).

It belongs to the EF-1-beta/EF-1-delta family.

Functionally, promotes the exchange of GDP for GTP in EF-1-alpha/GDP, thus allowing the regeneration of EF-1-alpha/GTP that could then be used to form the ternary complex EF-1-alpha/GTP/AAtRNA. The protein is Elongation factor 1-beta of Thermococcus onnurineus (strain NA1).